The primary structure comprises 518 residues: Serine/threonine-protein kinase UL13 (518 aa).

2 disordered regions span residues 1–22 (MDES…PQGA) and 39–120 (SRRA…PSPP). Residues 44-61 (GRPSGPSPRDGAVSGARP) show a composition bias toward low complexity. One can recognise a Protein kinase domain in the interval 151 to 518 (PGARSFGGSG…ANPAARHSLS (368 aa)). Residues 157-165 (GGSGGYGEV) and lysine 176 contribute to the ATP site. Aspartate 277 serves as the catalytic Proton acceptor.

Belongs to the protein kinase superfamily. Ser/Thr protein kinase family. In terms of processing, autophosphorylated.

Its subcellular location is the virion tegument. It is found in the host nucleus. It catalyses the reaction L-seryl-[protein] + ATP = O-phospho-L-seryl-[protein] + ADP + H(+). The catalysed reaction is L-threonyl-[protein] + ATP = O-phospho-L-threonyl-[protein] + ADP + H(+). Its function is as follows. Multifunctional serine/threonine kinase that plays a role in several processes including egress of virus particles from the nucleus, modulation of the actin cytoskeleton and regulation of viral and cellular gene expression. Regulates the nuclear localization of viral envelopment factors UL34 and UL31, by phosphorylating the US3 kinase, indicating a role in nuclear egress. Disrupts host nuclear lamins, including LMNA and LMNB1. Phosphorylates the viral Fc receptor composed of glycoproteins E (gE) and I (gI). Phosphorylation of glycoprotein E (gE) by UL13 alters its subcellular localization, from the host early endosome to the plasma membrane. Participates in the transcriptional regulation of cellular and viral mRNAs mainly by phosphorylating the viral transcriptional regulator ICP22. Additional substrates have been identified, including UL41, UL49 or host EF1D. The sequence is that of Serine/threonine-protein kinase UL13 from Homo sapiens (Human).